Reading from the N-terminus, the 291-residue chain is Aspartate carbamoyltransferase catalytic subunit (291 aa).

Carbamoyl phosphate-binding residues include Arg47 and Thr48. L-aspartate is bound at residue Lys75. Carbamoyl phosphate-binding residues include Arg97, His126, and Gln129. L-aspartate is bound by residues Arg159 and Arg213. Positions 251 and 252 each coordinate carbamoyl phosphate.

This sequence belongs to the aspartate/ornithine carbamoyltransferase superfamily. ATCase family. As to quaternary structure, heterododecamer (2C3:3R2) of six catalytic PyrB chains organized as two trimers (C3), and six regulatory PyrI chains organized as three dimers (R2).

It catalyses the reaction carbamoyl phosphate + L-aspartate = N-carbamoyl-L-aspartate + phosphate + H(+). It functions in the pathway pyrimidine metabolism; UMP biosynthesis via de novo pathway; (S)-dihydroorotate from bicarbonate: step 2/3. In terms of biological role, catalyzes the condensation of carbamoyl phosphate and aspartate to form carbamoyl aspartate and inorganic phosphate, the committed step in the de novo pyrimidine nucleotide biosynthesis pathway. The protein is Aspartate carbamoyltransferase catalytic subunit of Aquifex aeolicus (strain VF5).